Reading from the N-terminus, the 476-residue chain is 3-ketoacyl-CoA synthase 12 (476 aa).

Positions 1 to 25 are cleaved as a signal peptide; sequence MDLLFLFFSLLLSYLFFKIWKLIDS. The region spanning 26 to 313 is the FAE domain; sequence KQDKDCYILD…FMLKLLIKKI (288 aa). Catalysis depends on residues C168, H247, H344, H348, H377, and N381.

This sequence belongs to the thiolase-like superfamily. Chalcone/stilbene synthases family. As to expression, expressed in siliques, flowers and leaves.

The protein resides in the endoplasmic reticulum. It carries out the reaction a very-long-chain acyl-CoA + malonyl-CoA + H(+) = a very-long-chain 3-oxoacyl-CoA + CO2 + CoA. The protein operates within lipid metabolism; fatty acid biosynthesis. The chain is 3-ketoacyl-CoA synthase 12 from Arabidopsis thaliana (Mouse-ear cress).